A 311-amino-acid chain; its full sequence is Cyclin-dependent kinase B1-2 (311 aa).

The Protein kinase domain maps to 4–303; it reads YEKLEKVGEG…AKAALDHPYF (300 aa). ATP-binding positions include 10–18 and lysine 33; that span reads VGEGTYGKV. The residue at position 15 (tyrosine 15) is a Phosphotyrosine. Aspartate 144 acts as the Proton acceptor in catalysis. Threonine 178 carries the post-translational modification Phosphothreonine.

This sequence belongs to the protein kinase superfamily. CMGC Ser/Thr protein kinase family. CDC2/CDKX subfamily. In terms of assembly, interacts with CKS1. Expressed in flowers.

The catalysed reaction is L-seryl-[protein] + ATP = O-phospho-L-seryl-[protein] + ADP + H(+). It catalyses the reaction L-threonyl-[protein] + ATP = O-phospho-L-threonyl-[protein] + ADP + H(+). It carries out the reaction [DNA-directed RNA polymerase] + ATP = phospho-[DNA-directed RNA polymerase] + ADP + H(+). Together with CDKB1-1, promotes both the last division in the stomatal cell lineage as well as the number of stomata. In collaboration with MYB124 and MYB88, restrict the G1/S transition and chloroplast and nuclear number during stomatal formation, and normally maintain fate and developmental progression throughout the stomatal cell lineage. The protein is Cyclin-dependent kinase B1-2 (CDKB1-2) of Arabidopsis thaliana (Mouse-ear cress).